A 1538-amino-acid chain; its full sequence is Dicer-like protein 1 (1538 aa).

Residues Asp39 to Gln72 form a disordered region. Residues Ala45–Asp55 show a composition bias toward basic and acidic residues. The region spanning Leu134–Leu315 is the Helicase ATP-binding domain. Leu147–Thr154 is an ATP binding site. Positions Asp260 to His263 match the DEAH box motif. One can recognise a Helicase C-terminal domain in the interval Glu460–His619. Residues Ala652–Ala742 form the Dicer dsRNA-binding fold domain. One can recognise a PAZ domain in the interval Asp892–Ala1020. RNase III domains lie at Ile1044–Gly1203 and Ala1254–Lys1406. Mg(2+)-binding residues include Glu1295, Asp1392, and Glu1395. The DRBM domain occupies Thr1440–Gly1508. The Zn(2+) site is built by Cys1452, His1479, Cys1520, and Cys1522.

It belongs to the helicase family. Dicer subfamily. It depends on Mg(2+) as a cofactor. The cofactor is Mn(2+).

Functionally, dicer-like endonuclease involved in cleaving double-stranded RNA in the RNA interference (RNAi) pathway. Produces 21 to 25 bp dsRNAs (siRNAs) which target the selective destruction of homologous RNAs leading to sequence-specific suppression of gene expression, called post-transcriptional gene silencing (PTGS). Part of a broad host defense response against viral infection and transposons. The sequence is that of Dicer-like protein 1 (dcl1) from Neosartorya fischeri (strain ATCC 1020 / DSM 3700 / CBS 544.65 / FGSC A1164 / JCM 1740 / NRRL 181 / WB 181) (Aspergillus fischerianus).